Reading from the N-terminus, the 77-residue chain is MGSFSIWHWLIVLVIVMLVFGTKKLRNIGQDLGGAVKGFKDGMKDGEGKAAADPAQSKELRDSTTIDVEAKEKTRQQ.

Residues 1–21 traverse the membrane as a helical segment; that stretch reads MGSFSIWHWLIVLVIVMLVFG. The segment at 46–77 is disordered; the sequence is GEGKAAADPAQSKELRDSTTIDVEAKEKTRQQ.

This sequence belongs to the TatA/E family. In terms of assembly, the Tat system comprises two distinct complexes: a TatABC complex, containing multiple copies of TatA, TatB and TatC subunits, and a separate TatA complex, containing only TatA subunits. Substrates initially bind to the TatABC complex, which probably triggers association of the separate TatA complex to form the active translocon.

Its subcellular location is the cell inner membrane. Functionally, part of the twin-arginine translocation (Tat) system that transports large folded proteins containing a characteristic twin-arginine motif in their signal peptide across membranes. TatA could form the protein-conducting channel of the Tat system. The sequence is that of Sec-independent protein translocase protein TatA from Cupriavidus necator (strain ATCC 17699 / DSM 428 / KCTC 22496 / NCIMB 10442 / H16 / Stanier 337) (Ralstonia eutropha).